Here is a 335-residue protein sequence, read N- to C-terminus: GTPase Obg (335 aa).

The region spanning M1 to I158 is the Obg domain. The OBG-type G domain maps to A159–S334. GTP-binding positions include G165 to S172, F190 to H194, D215 to G218, N285 to D288, and S315 to L317. The Mg(2+) site is built by S172 and T192.

Belongs to the TRAFAC class OBG-HflX-like GTPase superfamily. OBG GTPase family. Monomer. It depends on Mg(2+) as a cofactor.

The protein resides in the cytoplasm. Its function is as follows. An essential GTPase which binds GTP, GDP and possibly (p)ppGpp with moderate affinity, with high nucleotide exchange rates and a fairly low GTP hydrolysis rate. Plays a role in control of the cell cycle, stress response, ribosome biogenesis and in those bacteria that undergo differentiation, in morphogenesis control. The protein is GTPase Obg of Chlamydia trachomatis serovar A (strain ATCC VR-571B / DSM 19440 / HAR-13).